The chain runs to 582 residues: 2-succinyl-5-enolpyruvyl-6-hydroxy-3-cyclohexene-1-carboxylate synthase (582 aa).

This sequence belongs to the TPP enzyme family. MenD subfamily. As to quaternary structure, homodimer. Mg(2+) serves as cofactor. Requires Mn(2+) as cofactor. The cofactor is thiamine diphosphate.

The catalysed reaction is isochorismate + 2-oxoglutarate + H(+) = 5-enolpyruvoyl-6-hydroxy-2-succinyl-cyclohex-3-ene-1-carboxylate + CO2. It functions in the pathway quinol/quinone metabolism; 1,4-dihydroxy-2-naphthoate biosynthesis; 1,4-dihydroxy-2-naphthoate from chorismate: step 2/7. The protein operates within quinol/quinone metabolism; menaquinone biosynthesis. Its function is as follows. Catalyzes the thiamine diphosphate-dependent decarboxylation of 2-oxoglutarate and the subsequent addition of the resulting succinic semialdehyde-thiamine pyrophosphate anion to isochorismate to yield 2-succinyl-5-enolpyruvyl-6-hydroxy-3-cyclohexene-1-carboxylate (SEPHCHC). In Chlorobaculum tepidum (strain ATCC 49652 / DSM 12025 / NBRC 103806 / TLS) (Chlorobium tepidum), this protein is 2-succinyl-5-enolpyruvyl-6-hydroxy-3-cyclohexene-1-carboxylate synthase.